The following is a 346-amino-acid chain: Hydroxymethylglutaryl-CoA synthase (346 aa).

(3S)-3-hydroxy-3-methylglutaryl-CoA is bound at residue Asp-28. Glu-80 serves as the catalytic Proton donor/acceptor. 2 residues coordinate (3S)-3-hydroxy-3-methylglutaryl-CoA: Cys-112 and Thr-153. Catalysis depends on Cys-112, which acts as the Acyl-thioester intermediate. Arg-199 contributes to the CoA binding site. 2 residues coordinate (3S)-3-hydroxy-3-methylglutaryl-CoA: Thr-201 and His-234. The active-site Proton donor/acceptor is the His-234. A CoA-binding site is contributed by Lys-239. The (3S)-3-hydroxy-3-methylglutaryl-CoA site is built by Arg-243, Asn-266, and Ser-296.

It belongs to the thiolase-like superfamily. Archaeal HMG-CoA synthase family. In terms of assembly, interacts with acetoacetyl-CoA thiolase that catalyzes the precedent step in the pathway and with a DUF35 protein. The acetoacetyl-CoA thiolase/HMG-CoA synthase complex channels the intermediate via a fused CoA-binding site, which allows for efficient coupling of the endergonic thiolase reaction with the exergonic HMGCS reaction.

It catalyses the reaction acetoacetyl-CoA + acetyl-CoA + H2O = (3S)-3-hydroxy-3-methylglutaryl-CoA + CoA + H(+). It functions in the pathway metabolic intermediate biosynthesis; (R)-mevalonate biosynthesis; (R)-mevalonate from acetyl-CoA: step 2/3. In terms of biological role, catalyzes the condensation of acetyl-CoA with acetoacetyl-CoA to form 3-hydroxy-3-methylglutaryl-CoA (HMG-CoA). Functions in the mevalonate (MVA) pathway leading to isopentenyl diphosphate (IPP), a key precursor for the biosynthesis of isoprenoid compounds that are building blocks of archaeal membrane lipids. This chain is Hydroxymethylglutaryl-CoA synthase, found in Methanosphaera stadtmanae (strain ATCC 43021 / DSM 3091 / JCM 11832 / MCB-3).